Reading from the N-terminus, the 428-residue chain is 3-phosphoshikimate 1-carboxyvinyltransferase (428 aa).

3 residues coordinate 3-phosphoshikimate: Lys-22, Ser-23, and Arg-27. Lys-22 is a binding site for phosphoenolpyruvate. Gly-94 and Arg-122 together coordinate phosphoenolpyruvate. The 3-phosphoshikimate site is built by Ser-167, Gln-169, Asp-314, and Lys-341. Gln-169 contributes to the phosphoenolpyruvate binding site. The Proton acceptor role is filled by Asp-314. Residues Arg-345 and Arg-387 each coordinate phosphoenolpyruvate.

The protein belongs to the EPSP synthase family. In terms of assembly, monomer.

It is found in the cytoplasm. It carries out the reaction 3-phosphoshikimate + phosphoenolpyruvate = 5-O-(1-carboxyvinyl)-3-phosphoshikimate + phosphate. It functions in the pathway metabolic intermediate biosynthesis; chorismate biosynthesis; chorismate from D-erythrose 4-phosphate and phosphoenolpyruvate: step 6/7. In terms of biological role, catalyzes the transfer of the enolpyruvyl moiety of phosphoenolpyruvate (PEP) to the 5-hydroxyl of shikimate-3-phosphate (S3P) to produce enolpyruvyl shikimate-3-phosphate and inorganic phosphate. The polypeptide is 3-phosphoshikimate 1-carboxyvinyltransferase (Geotalea uraniireducens (strain Rf4) (Geobacter uraniireducens)).